The primary structure comprises 110 residues: Large ribosomal subunit protein uL24 (110 aa).

Belongs to the universal ribosomal protein uL24 family. Part of the 50S ribosomal subunit.

One of two assembly initiator proteins, it binds directly to the 5'-end of the 23S rRNA, where it nucleates assembly of the 50S subunit. Its function is as follows. One of the proteins that surrounds the polypeptide exit tunnel on the outside of the subunit. This is Large ribosomal subunit protein uL24 from Thermus thermophilus (strain ATCC BAA-163 / DSM 7039 / HB27).